The following is a 466-amino-acid chain: 3-isopropylmalate dehydratase large subunit (466 aa).

[4Fe-4S] cluster is bound by residues Cys347, Cys407, and Cys410.

It belongs to the aconitase/IPM isomerase family. LeuC type 1 subfamily. As to quaternary structure, heterodimer of LeuC and LeuD. It depends on [4Fe-4S] cluster as a cofactor.

It catalyses the reaction (2R,3S)-3-isopropylmalate = (2S)-2-isopropylmalate. It functions in the pathway amino-acid biosynthesis; L-leucine biosynthesis; L-leucine from 3-methyl-2-oxobutanoate: step 2/4. Catalyzes the isomerization between 2-isopropylmalate and 3-isopropylmalate, via the formation of 2-isopropylmaleate. The chain is 3-isopropylmalate dehydratase large subunit from Shigella dysenteriae serotype 1 (strain Sd197).